The primary structure comprises 308 residues: Acetylglutamate kinase (308 aa).

Residues 73–74 (GG), Arg95, and Asn194 contribute to the substrate site.

This sequence belongs to the acetylglutamate kinase family. ArgB subfamily.

Its subcellular location is the cytoplasm. It carries out the reaction N-acetyl-L-glutamate + ATP = N-acetyl-L-glutamyl 5-phosphate + ADP. It participates in amino-acid biosynthesis; L-arginine biosynthesis; N(2)-acetyl-L-ornithine from L-glutamate: step 2/4. Its function is as follows. Catalyzes the ATP-dependent phosphorylation of N-acetyl-L-glutamate. This Rhodococcus jostii (strain RHA1) protein is Acetylglutamate kinase.